Consider the following 152-residue polypeptide: Xanthine-guanine phosphoribosyltransferase (152 aa).

5-phospho-alpha-D-ribose 1-diphosphate-binding positions include 37 to 38 (RG), Arg69, and 88 to 96 (DDLVDTGGT). Arg69 provides a ligand contact to GMP. Asp89 contributes to the Mg(2+) binding site. Guanine-binding residues include Asp92 and Ile135. Residues Asp92 and Ile135 each contribute to the xanthine site. GMP contacts are provided by residues 92–96 (DTGGT) and 134–135 (WI).

Belongs to the purine/pyrimidine phosphoribosyltransferase family. XGPT subfamily. As to quaternary structure, homotetramer. Mg(2+) serves as cofactor.

It is found in the cell inner membrane. The enzyme catalyses GMP + diphosphate = guanine + 5-phospho-alpha-D-ribose 1-diphosphate. It catalyses the reaction XMP + diphosphate = xanthine + 5-phospho-alpha-D-ribose 1-diphosphate. It carries out the reaction IMP + diphosphate = hypoxanthine + 5-phospho-alpha-D-ribose 1-diphosphate. The protein operates within purine metabolism; GMP biosynthesis via salvage pathway; GMP from guanine: step 1/1. Its pathway is purine metabolism; XMP biosynthesis via salvage pathway; XMP from xanthine: step 1/1. In terms of biological role, purine salvage pathway enzyme that catalyzes the transfer of the ribosyl-5-phosphate group from 5-phospho-alpha-D-ribose 1-diphosphate (PRPP) to the N9 position of the 6-oxopurines guanine and xanthine to form the corresponding ribonucleotides GMP (guanosine 5'-monophosphate) and XMP (xanthosine 5'-monophosphate), with the release of PPi. To a lesser extent, also acts on hypoxanthine. This chain is Xanthine-guanine phosphoribosyltransferase, found in Klebsiella pneumoniae (strain 342).